Reading from the N-terminus, the 93-residue chain is Antitoxin RelF (93 aa).

It belongs to the phD/YefM antitoxin family. In terms of assembly, interacts with toxin RelG, which neutralizes the toxin. Also interacts with toxins RelE and RelK in vitro, in M.smegmatis coexpression with non-cognate toxins increases the toxicity of RelE but not of RelK.

Antitoxin component of a type II toxin-antitoxin (TA) system. Upon expression in M.smegmatis neutralizes the effect of toxin RelE2. Its function is as follows. Induces its own promoter, in combination with RelG represses its own promoter. Has been seen to bind DNA in complex with toxin RelG but not alone. In Mycobacterium tuberculosis (strain ATCC 25618 / H37Rv), this protein is Antitoxin RelF (relF).